Consider the following 375-residue polypeptide: Matrix protein (375 aa).

Belongs to the morbillivirus/respirovirus/rubulavirus M protein family.

The protein resides in the virion. Functionally, the M protein has a crucial role in virus assembly and interacts with the RNP complex as well as with the viral membrane. This is Matrix protein (M) from Homo sapiens (Human).